Here is a 115-residue protein sequence, read N- to C-terminus: MNLVMALLTNTALASLLVLIAFWLPQLNSYAEKTSPYECGFDPMGSARLPFSMKFFLVAITFLLFDLEVALLLPLPWATQTTNLKTMLIMALTLISLLAISLAYEWTQKGLEWTE.

The next 3 membrane-spanning stretches (helical) occupy residues 3–23 (LVMA…IAFW), 55–75 (FFLV…LLPL), and 86–106 (TMLI…AYEW).

It belongs to the complex I subunit 3 family. As to quaternary structure, core subunit of respiratory chain NADH dehydrogenase (Complex I) which is composed of 45 different subunits. Interacts with TMEM186. Interacts with TMEM242.

The protein localises to the mitochondrion inner membrane. The catalysed reaction is a ubiquinone + NADH + 5 H(+)(in) = a ubiquinol + NAD(+) + 4 H(+)(out). Core subunit of the mitochondrial membrane respiratory chain NADH dehydrogenase (Complex I) which catalyzes electron transfer from NADH through the respiratory chain, using ubiquinone as an electron acceptor. Essential for the catalytic activity of complex I. The protein is NADH-ubiquinone oxidoreductase chain 3 of Hippopotamus amphibius (Hippopotamus).